Reading from the N-terminus, the 254-residue chain is D-aminoacyl-tRNA deacylase (254 aa).

Residues 61-83 (KPTLTVHTPGNLTEDNSHGGNPE) form a disordered region. Polar residues predominate over residues 65 to 74 (TVHTPGNLTE).

The protein belongs to the DtdA deacylase family. As to quaternary structure, monomer. Zn(2+) is required as a cofactor.

It carries out the reaction a D-aminoacyl-tRNA + H2O = a tRNA + a D-alpha-amino acid + H(+). The enzyme catalyses glycyl-tRNA(Ala) + H2O = tRNA(Ala) + glycine + H(+). In terms of biological role, D-aminoacyl-tRNA deacylase with broad substrate specificity. By recycling D-aminoacyl-tRNA to D-amino acids and free tRNA molecules, this enzyme counteracts the toxicity associated with the formation of D-aminoacyl-tRNA entities in vivo. The sequence is that of D-aminoacyl-tRNA deacylase from Methanococcus maripaludis (strain C7 / ATCC BAA-1331).